A 172-amino-acid chain; its full sequence is Translationally-controlled tumor protein (172 aa).

Residues 1-172 (MIIYRDLISH…FKDGLEMEKC (172 aa)) form the TCTP domain. Ser46 carries the post-translational modification Phosphoserine; by PLK1. Position 53 is a phosphoserine (Ser53). Ser64 is subject to Phosphoserine; by PLK1. Residues 70 to 172 (VDIVMNHHLQ…FKDGLEMEKC (103 aa)) are required for reduction of TSC22D1 protein stability.

Belongs to the TCTP family. Homodimer. Interacts with STEAP3. Interacts with TSC22D1; interaction results in the destabilization of TSC22D1 protein.

The protein localises to the cytoplasm. Involved in calcium binding and microtubule stabilization. Acts as a negative regulator of TSC22D1-mediated apoptosis, via interaction with and destabilization of TSC22D1 protein. This Oryctolagus cuniculus (Rabbit) protein is Translationally-controlled tumor protein (TPT1).